A 327-amino-acid polypeptide reads, in one-letter code: Ribonucleoside-diphosphate reductase small chain (327 aa).

Fe cation-binding residues include Asp70, Glu101, and His104. Tyr108 is a catalytic residue. Glu164, Glu198, and His201 together coordinate Fe cation.

This sequence belongs to the ribonucleoside diphosphate reductase small chain family. Heterotetramer composed of a homodimer of the large subunit (R1) and a homodimer of the small subunit (R2). Larger multisubunit protein complex are also active, composed of (R1)n(R2)n. Fe cation is required as a cofactor.

It catalyses the reaction a 2'-deoxyribonucleoside 5'-diphosphate + [thioredoxin]-disulfide + H2O = a ribonucleoside 5'-diphosphate + [thioredoxin]-dithiol. Functionally, ribonucleoside-diphosphate reductase holoenzyme provides the precursors necessary for viral DNA synthesis. Allows virus growth in non-dividing cells. Catalyzes the biosynthesis of deoxyribonucleotides from the corresponding ribonucleotides. This is Ribonucleoside-diphosphate reductase small chain from Ornithodoros (relapsing fever ticks).